A 1413-amino-acid polypeptide reads, in one-letter code: Zinc finger protein 609 (1413 aa).

Disordered regions lie at residues 1–26, 47–196, 354–484, 517–659, and 695–765; these read MSLSSGACGGKGVDANPVETYDSGDE, QKLE…GRGS, RFCD…EPTL, AHAH…RPIA, and PNSP…AAGD. Phosphoserine occurs at positions 358, 361, and 379. Position 381 is a phosphothreonine (threonine 381). The span at 386 to 405 shows a compositional bias: low complexity; the sequence is AAAASDSKGTSSSSKTRAGA. 6 positions are modified to phosphoserine: serine 413, serine 433, serine 446, serine 452, serine 467, and serine 470. Polar residues predominate over residues 423–437; the sequence is ASSTSEDVKASPSSA. Lysine 479 participates in a covalent cross-link: Glycyl lysine isopeptide (Lys-Gly) (interchain with G-Cter in SUMO2). A C2H2-type zinc finger spans residues 495 to 520; that stretch reads IDCPHPNCNKKYKHINGLKYHQAHAH. Over residues 519–529 the composition is skewed to basic and acidic residues; sequence AHTDDDSKPEA. Phosphoserine is present on residues serine 533, serine 575, and serine 577. Basic and acidic residues predominate over residues 625–648; that stretch reads SLERKCMEKEKCKKPSSLKSEKIP. Residues 725–735 show a composition bias toward basic residues; that stretch reads DKKKKDKKKKD. A Phosphoserine modification is found at serine 742. Threonine 745 is subject to Phosphothreonine. Positions 750–763 are enriched in basic and acidic residues; sequence CRAEEGKSPFRDAA. A Phosphoserine modification is found at serine 757. Lysine 788 participates in a covalent cross-link: Glycyl lysine isopeptide (Lys-Gly) (interchain with G-Cter in SUMO2). Positions 797 to 843 are enriched in polar residues; sequence FTDNAPSPSIGGSSRLDSTTPTQPLTPLHVVTQNGAEASSVKTNSPA. Disordered regions lie at residues 797 to 962, 1004 to 1127, 1154 to 1221, and 1273 to 1369; these read FTDN…VIQQ, YEEQ…RQAE, IKSE…SPLT, and SKVS…STHH. Serine 803 is modified (phosphoserine). Threonine 822 is subject to Phosphothreonine. Phosphoserine is present on residues serine 841, serine 845, and serine 848. Over residues 854–875 the composition is skewed to basic and acidic residues; the sequence is GEGKVDSAKSKDPEQLVKEGAK. Positions 902 to 916 are enriched in polar residues; that stretch reads YAQSSPGTLTSSSQA. A compositionally biased stretch (basic and acidic residues) spans 925–949; the sequence is TKKDEEPESVEGKVKNDVCEEKKPE. The span at 950–962 shows a compositional bias: polar residues; that stretch reads LSNSSQQPSVIQQ. The span at 1022–1044 shows a compositional bias: basic and acidic residues; the sequence is GLDKKTEMGLKEREASLKEEWKQ. A Phosphoserine modification is found at serine 1057. A Glycyl lysine isopeptide (Lys-Gly) (interchain with G-Cter in SUMO2) cross-link involves residue lysine 1063. Composition is skewed to basic and acidic residues over residues 1099-1115, 1154-1189, and 1197-1210; these read LKGKLGEASHLGKEASE, IKSEDDRWKEERDRKLKEDRSRSKDSVPKEDGKEST, and PSEESRLGSKEPRP. Residue lysine 1155 forms a Glycyl lysine isopeptide (Lys-Gly) (interchain with G-Cter in SUMO2) linkage. Residues 1288–1298 are compositionally biased toward polar residues; that stretch reads PSVSCKASSES. Lysine 1299 is covalently cross-linked (Glycyl lysine isopeptide (Lys-Gly) (interchain with G-Cter in SUMO2)). Over residues 1330–1348 the composition is skewed to gly residues; sequence GCGVVGGGGSCGSVAGAGG.

In terms of assembly, interacts (via N-terminus) with NIPBL. Interacts with the multiprotein complex Integrator. Expressed in myoblasts. Expressed in neurons in various brain regions, including striatum, prefrontal cortex, olfactory bulb, midbrain, cerebellum and hippocampus. Expressed in neural stem cells (at protein level). Expressed in thymocytes.

The protein resides in the nucleus. Transcription factor, which activates RAG1, and possibly RAG2, transcription. Through the regulation of RAG1/2 expression, may regulate thymocyte maturation. Along with NIPBL and the multiprotein complex Integrator, promotes cortical neuron migration during brain development by regulating the transcription of crucial genes in this process. Preferentially binds promoters containing paused RNA polymerase II. Up-regulates the expression of SEMA3A, NRP1, PLXND1 and GABBR2 genes, among others. Its function is as follows. Involved in regulation of myoblast proliferation during myogenesis. In Mus musculus (Mouse), this protein is Zinc finger protein 609 (Znf609).